Consider the following 671-residue polypeptide: Probable potassium transport system protein Kup 2 (671 aa).

Transmembrane regions (helical) follow at residues 18 to 38 (GFLIALGIVYGDIGTSPLYAM), 60 to 80 (VSLVIWTLTLITTVKYVLIAL), 103 to 123 (WLIVPAMIGGATLLADGALTP), 149 to 169 (VTTLIILAFLFLIQRFGASLV), 173 to 193 (FGPIMFIWFGFLGVSGLINSF), 218 to 238 (AGFFILGSIFLVTTGAEALYS), 252 to 272 (WPFVKICIILSYCGQGAWLLA), 292 to 312 (MVIYVVILSTLAAIIASQALI), 343 to 363 (LYIPAVNFALWVTTSFFVLYF), 373 to 393 (YSLAITITMLMTTTLLTYFLI), 402 to 422 (IAFISIGLFCIEGSFFAASLV), and 424 to 444 (FINGAYIVVLIALAIIFVMFI).

This sequence belongs to the HAK/KUP transporter (TC 2.A.72) family.

The protein localises to the cell membrane. It carries out the reaction K(+)(in) + H(+)(in) = K(+)(out) + H(+)(out). Functionally, transport of potassium into the cell. Likely operates as a K(+):H(+) symporter. The polypeptide is Probable potassium transport system protein Kup 2 (Lactococcus lactis subsp. cremoris (strain SK11)).